Reading from the N-terminus, the 124-residue chain is Magnetosome protein MamC (124 aa).

Topologically, residues 2–8 are cytoplasmic; the sequence is PFHLAPY. A helical transmembrane segment spans residues 9–29; that stretch reads LAKSVPGVGVLGALVGGAAAL. Over 30–64 the chain is Lumenal; it reads AKNVRLLKEKRITNTEAAIDTGKETVGAGLATALS. Residues 36 to 56 are MIC, when fused with the C-terminus of maltose-binding protein (MBP) or expressed as a fragment, improves quality of iron particles during precipitation experiments, binds magnetite; that stretch reads LKEKRITNTEAAIDTGKETVG. The chain crosses the membrane as a helical span at residues 65–85; the sequence is AVAATAVGGGLVVSLGTALVA. Topologically, residues 86–124 are cytoplasmic; it reads GVAAKYAWDRGVDLVEKELNRGKAANGASDEDILRDELA.

This sequence belongs to the magnetosome MamC family. Probably interacts with MamA.

The protein resides in the magnetosome membrane. In terms of biological role, probably involved in magnetite crystal growth. The lumenal domain may bind the magnetite crystals, affecting crystal size and shape. The polypeptide is Magnetosome protein MamC (Paramagnetospirillum magneticum (strain ATCC 700264 / AMB-1) (Magnetospirillum magneticum)).